Consider the following 628-residue polypeptide: Basal cell adhesion molecule (628 aa).

Residues 1–31 (MEPPDAPAQARGAPRLLLLAVLLAAHPDAQA) form the signal peptide. Ig-like V-type domains lie at 32–142 (EVRL…ARLN) and 147–257 (PEAT…PTFH). Topologically, residues 32 to 547 (EVRLSVPPLV…GTVSPQTSQA (516 aa)) are extracellular. Disulfide bonds link Cys-53-Cys-125, Cys-172-Cys-237, and Cys-291-Cys-337. Ig-like C2-type domains are found at residues 274 to 355 (PSTP…KTLE), 363 to 441 (PLEL…QNFT), and 448 to 541 (PELK…GTVS). The interaction with laminin alpha5 stretch occupies residues 309 to 312 (EQEE). Residues Asn-321, Asn-377, Asn-383, Asn-419, and Asn-439 are each glycosylated (N-linked (GlcNAc...) asparagine). An intrachain disulfide couples Cys-384 to Cys-424. Cysteines 473 and 522 form a disulfide. A helical membrane pass occupies residues 548–568 (GVAVMAVAVSVGLLLLVVAVF). Topologically, residues 569 to 628 (YCVRRKGGPCCRQRREKGAPPPGEPGLSHSGSEQPEQTGLLMGGASGGARGGSGGFGDEC) are cytoplasmic. Residues 579–628 (CRQRREKGAPPPGEPGLSHSGSEQPEQTGLLMGGASGGARGGSGGFGDEC) are disordered. Ser-596 bears the Phosphoserine; by GSK3 mark. A Phosphoserine; by CK2 modification is found at Ser-598. Phosphoserine is present on Ser-600. Gly residues predominate over residues 609–628 (LMGGASGGARGGSGGFGDEC). At Ser-621 the chain carries Phosphoserine; by PKA or PKB/AKT1.

As to quaternary structure, homodimer. Interacts with ITGA4:ITGB1. Interacts with spectrins SPTA1 and SPTB1. In terms of processing, epinephrine-stimulated phosphorylation of Ser-621 by PKA enhances adhesion to laminin. Ser-621 can also be phosphorylated by AKT1. As to expression, wide tissue distribution (highest in the pancreas and very low in brain). Closely associated with the basal layer of cells in epithelia and the endothelium of blood vessel walls.

The protein localises to the cell membrane. Transmembrane glycoprotein that functions as both a receptor and an adhesion molecule playing a crucial role in cell adhesion, motility, migration and invasion. Extracellular domain enables binding to extracellular matrix proteins, such as laminin, integrin and other ligands while its intracellular domain interacts with cytoskeletal proteins like hemoglobin, facilitating cell signal transduction. Serves as a receptor for laminin alpha-5/LAMA5 to promote cell adhesion. Mechanistically, JAK2 induces BCAM phosphorylation and activates its adhesion to laminin by stimulating a Rap1/AKT signaling pathway in the absence of EPOR. This is Basal cell adhesion molecule (BCAM) from Homo sapiens (Human).